A 287-amino-acid chain; its full sequence is Inositol-1-monophosphatase (287 aa).

4 residues coordinate Mg(2+): Glu79, Asp96, Leu98, and Asp99. Position 79 (Glu79) interacts with substrate. Residues 98–101 (LDGT), Arg195, and Asp224 contribute to the substrate site. Asp224 contributes to the Mg(2+) binding site.

This sequence belongs to the inositol monophosphatase superfamily. Mg(2+) is required as a cofactor.

It carries out the reaction a myo-inositol phosphate + H2O = myo-inositol + phosphate. The chain is Inositol-1-monophosphatase (suhB) from Synechocystis sp. (strain ATCC 27184 / PCC 6803 / Kazusa).